Here is a 505-residue protein sequence, read N- to C-terminus: Metalloprotease TIKI1 (505 aa).

The N-terminal stretch at 1–19 is a signal peptide; the sequence is MSPWSWFLLQTLCLLPTGA. The Extracellular segment spans residues 20 to 477; that stretch reads ASRRGAPGTA…RRGHSHHSQM (458 aa). 4 N-linked (GlcNAc...) asparagine glycosylation sites follow: Asn-220, Asn-229, Asn-278, and Asn-336. Residues 389–428 form a disordered region; that stretch reads PEAVSSGHSTLPPLVSRPGSADTPSEAEQRFRKKRRRSQR. Positions 419-428 are enriched in basic residues; it reads FRKKRRRSQR. A helical transmembrane segment spans residues 478 to 498; the sequence is VASSACLSLWTPVFWVLVLAF. Residues 499-505 are Cytoplasmic-facing; the sequence is QTETPLL.

This sequence belongs to the TIKI family. Requires Mn(2+) as cofactor. Co(2+) serves as cofactor.

It is found in the cell membrane. Functionally, metalloprotease that acts as a negative regulator of the Wnt signaling pathway by mediating the cleavage of the 8 N-terminal residues of a subset of Wnt proteins. Following cleavage, Wnt proteins become oxidized and form large disulfide-bond oligomers, leading to their inactivation. Able to cleave WNT3A, WNT5, but not WNT11. Required for head formation. This is Metalloprotease TIKI1 (TRABD2A) from Homo sapiens (Human).